The following is a 489-amino-acid chain: Lysine-specific permease LysP (489 aa).

Residues 2–22 (VSETKTTEAPGLRRELKARHL) are Cytoplasmic-facing. Residues 23 to 43 (TMIAIGGSIGTGLFVASGATI) traverse the membrane as a helical segment. The Periplasmic portion of the chain corresponds to 44-45 (SQ). The helical transmembrane segment at 46–66 (AGPGGALLSYMLIGLMVYFLM) threads the bilayer. The Cytoplasmic portion of the chain corresponds to 67-105 (TSLGELAAYMPVSGSFATYGQNYVEEGFGFALGWNYWYN). The chain crosses the membrane as a helical span at residues 106 to 126 (WAVTIAVDLVAAQLVMSWWFP). Residues 127–128 (DT) are Periplasmic-facing. Residues 129 to 149 (PGWIWSALFLGVIFLLNYISV) traverse the membrane as a helical segment. The Cytoplasmic portion of the chain corresponds to 150–161 (RGFGEAEYWFSL). The chain crosses the membrane as a helical span at residues 162-182 (IKVTTVIVFIIVGVLMIIGIF). The Periplasmic segment spans residues 183 to 197 (KGAQPAGWSNWTIGE). The helical transmembrane segment at 198–218 (APFAGGFAAMIGVAMIVGFSF) threads the bilayer. At 219 to 244 (QGTELIGIAAGESEDPAKNIPRAVRQ) the chain is on the cytoplasmic side. Residues 245–265 (VFWRILLFYVFAILIISLIIP) traverse the membrane as a helical segment. At 266 to 290 (YTDPSLLRNDVKDISVSPFTLVFQH) the chain is on the periplasmic side. A helical membrane pass occupies residues 291 to 311 (AGLLSAAAVMNAVILTAVLSA). At 312-346 (GNSGMYASTRMLYTLACDGKAPRIFAKLSRGGVPR) the chain is on the cytoplasmic side. A helical membrane pass occupies residues 347–367 (NALYATTVIAGLCFLTSMFGN). Topologically, residues 368 to 370 (QTV) are periplasmic. The helical transmembrane segment at 371–391 (YLWLLNTSGMTGFIAWLGIAI) threads the bilayer. Residues 392-413 (SHYRFRRGYVLQGHDINDLPYR) lie on the Cytoplasmic side of the membrane. The chain crosses the membrane as a helical span at residues 414–434 (SGFFPLGPIFAFILCLIITLG). The Periplasmic segment spans residues 435–446 (QNYEAFLKDTID). A helical transmembrane segment spans residues 447-467 (WGGVAATYIGIPLFLIIWFGY). Residues 468–489 (KLIKGTHFVRYSEMKFPQNDKK) are Cytoplasmic-facing.

It belongs to the amino acid-polyamine-organocation (APC) superfamily. Amino acid transporter (AAT) (TC 2.A.3.1) family. As to quaternary structure, interacts strongly with the transcriptional activator CadC in the absence of lysine or at low lysine concentrations. Interaction is markedly attenuated under increasing lysine levels. Concomitant pH-dependent protonation of periplasmic amino acids in both proteins dissolves their electrostatic connections resulting in further destabilization of the CadC/LysP interaction. Low pH promotes oligomerization of LysP.

It is found in the cell inner membrane. It catalyses the reaction L-lysine(out) + H(+)(out) = L-lysine(in) + H(+)(in). In terms of biological role, permease involved in lysine uptake. In addition, functions as a lysine sensor that mediates the lysine-dependent regulation of the transcriptional activator CadC. In the absence of lysine, or at low lysine concentrations, LysP inhibits CadC by an interaction with the transmembrane domain of CadC. In the presence of lysine, LysP loses its ability to interact with and inhibit CadC, and acts as a lysine permease. This chain is Lysine-specific permease LysP, found in Escherichia coli (strain K12).